Consider the following 352-residue polypeptide: Decapping nuclease din1 (352 aa).

Residues arginine 33 and 93–95 (WRG) contribute to the substrate site. A divalent metal cation is bound at residue glutamate 150. Substrate is bound by residues cysteine 182 and glutamate 199. A divalent metal cation is bound at residue aspartate 201. The residue at position 218 (serine 218) is a Phosphoserine. Residues glutamate 239 and leucine 240 each contribute to the a divalent metal cation site. Lysine 241 and glutamine 263 together coordinate substrate.

Belongs to the DXO/Dom3Z family. Interacts with dhp1/Rat1; the interaction is direct, stabilizes dhp1 protein structure and stimulates its exoribonuclease activity. The interaction also stimulates din1 pyrophosphohydrolase activity, probably by recruiting it to mRNA substrates. Requires a divalent metal cation as cofactor.

The protein localises to the nucleus. The catalysed reaction is a 5'-end NAD(+)-phospho-ribonucleoside in mRNA + H2O = a 5'-end phospho-ribonucleoside in mRNA + NAD(+) + H(+). It carries out the reaction a 5'-end (N(7)-methyl 5'-triphosphoguanosine)-ribonucleoside-ribonucleotide in mRNA + H2O = a (N(7)-methyl 5'-triphosphoguanosine)-nucleoside + a 5'-end phospho-ribonucleoside in mRNA + H(+). The enzyme catalyses a 5'-end triphospho-ribonucleoside in mRNA + H2O = a 5'-end phospho-ribonucleoside in mRNA + diphosphate + H(+). Decapping enzyme for NAD-capped RNAs: specifically hydrolyzes the nicotinamide adenine dinucleotide (NAD) cap from a subset of RNAs by removing the entire NAD moiety from the 5'-end of an NAD-capped RNA. The NAD-cap is present at the 5'-end of some RNAs and snoRNAs. In contrast to the canonical 5'-end N7 methylguanosine (m7G) cap, the NAD cap promotes mRNA decay. Also acts as a non-canonical decapping enzyme that removes the entire cap structure of m7G capped or incompletely capped RNAs and mediates their subsequent degradation. Specifically degrades pre-mRNAs with a defective m7G cap and is part of a pre-mRNA capping quality control. Has decapping activity toward incomplete 5'-end m7G cap mRNAs such as unmethylated 5'-end-capped RNA (cap0), while it has no activity toward 2'-O-ribose methylated m7G cap (cap1). Also possesses RNA 5'-pyrophosphohydrolase activity by hydrolyzing the 5'-end triphosphate to release pyrophosphates. Stimulates exoribonuclease activity of dhp1, allowing it to degrade RNAs with stable secondary structure more effectively. This is Decapping nuclease din1 from Schizosaccharomyces pombe (strain 972 / ATCC 24843) (Fission yeast).